Here is a 485-residue protein sequence, read N- to C-terminus: ATP synthase subunit beta (485 aa).

Residues 1–11 are compositionally biased toward basic and acidic residues; the sequence is MPATETADKNT. Residues 1–20 form a disordered region; the sequence is MPATETADKNTKSANSDTSG. Residue 170-177 coordinates ATP; the sequence is GGAGVGKT.

This sequence belongs to the ATPase alpha/beta chains family. In terms of assembly, F-type ATPases have 2 components, CF(1) - the catalytic core - and CF(0) - the membrane proton channel. CF(1) has five subunits: alpha(3), beta(3), gamma(1), delta(1), epsilon(1). CF(0) has three main subunits: a(1), b(2) and c(9-12). The alpha and beta chains form an alternating ring which encloses part of the gamma chain. CF(1) is attached to CF(0) by a central stalk formed by the gamma and epsilon chains, while a peripheral stalk is formed by the delta and b chains.

The protein resides in the cell membrane. It carries out the reaction ATP + H2O + 4 H(+)(in) = ADP + phosphate + 5 H(+)(out). In terms of biological role, produces ATP from ADP in the presence of a proton gradient across the membrane. The catalytic sites are hosted primarily by the beta subunits. In Mycobacterium avium (strain 104), this protein is ATP synthase subunit beta.